A 90-amino-acid chain; its full sequence is uncharacterized protein (90 aa).

An N-terminal signal peptide occupies residues 1-18 (MSRALFAVVLAFPLIALA).

This is an uncharacterized protein from Escherichia coli (strain K12).